A 185-amino-acid polypeptide reads, in one-letter code: Ribosome-recycling factor (185 aa).

It belongs to the RRF family.

Its subcellular location is the cytoplasm. Responsible for the release of ribosomes from messenger RNA at the termination of protein biosynthesis. May increase the efficiency of translation by recycling ribosomes from one round of translation to another. This is Ribosome-recycling factor from Lactococcus lactis subsp. lactis (strain IL1403) (Streptococcus lactis).